Here is a 437-residue protein sequence, read N- to C-terminus: Magnetosome protein MamN (437 aa).

Transmembrane regions (helical) follow at residues 26 to 46 (LAVL…GSYT), 53 to 73 (SVYF…ALLA), 95 to 115 (WILV…NSLV), 136 to 156 (VPVI…TMIG), 174 to 194 (FIAG…VFFE), 226 to 246 (LLSY…LAGP), 252 to 268 (GWIA…LGRF), 281 to 301 (DILF…VGIL), 320 to 340 (AILL…GTSA), 358 to 378 (AAWW…LPGA), and 416 to 436 (WGMP…AVLV).

This sequence belongs to the arsenite-antimonite (ArsB) efflux (TC 2.A.45) family.

The protein localises to the magnetosome membrane. Functionally, plays a role in biomineralization; might regulate pH in the magnetosome. The protein is Magnetosome protein MamN (mamN) of Paramagnetospirillum magneticum (strain ATCC 700264 / AMB-1) (Magnetospirillum magneticum).